The primary structure comprises 403 residues: 3-oxoacyl-[acyl-carrier-protein] synthase 2 (403 aa).

The 403-residue stretch at 1–403 (VITGMGALSP…GGHNAVLVFK (403 aa)) folds into the Ketosynthase family 3 (KS3) domain. Residues Cys158, His297, and His334 each act as for beta-ketoacyl synthase activity in the active site.

This sequence belongs to the thiolase-like superfamily. Beta-ketoacyl-ACP synthases family.

It carries out the reaction a fatty acyl-[ACP] + malonyl-[ACP] + H(+) = a 3-oxoacyl-[ACP] + holo-[ACP] + CO2. The enzyme catalyses (9Z)-hexadecenoyl-[ACP] + malonyl-[ACP] + H(+) = 3-oxo-(11Z)-octadecenoyl-[ACP] + holo-[ACP] + CO2. The protein operates within lipid metabolism; fatty acid biosynthesis. Functionally, involved in the type II fatty acid elongation cycle. Catalyzes the elongation of a wide range of acyl-ACP by the addition of two carbons from malonyl-ACP to an acyl acceptor. Can efficiently catalyze the conversion of palmitoleoyl-ACP (cis-hexadec-9-enoyl-ACP) to cis-vaccenoyl-ACP (cis-octadec-11-enoyl-ACP), an essential step in the thermal regulation of fatty acid composition. This chain is 3-oxoacyl-[acyl-carrier-protein] synthase 2 (fabF), found in Staphylococcus aureus.